The chain runs to 399 residues: uncharacterized protein (399 aa).

This sequence belongs to the TelA family.

This is an uncharacterized protein from Listeria monocytogenes serovar 1/2a (strain ATCC BAA-679 / EGD-e).